Consider the following 58-residue polypeptide: Probable mRNA interferase HicA 2 (58 aa).

It belongs to the HicA mRNA interferase family. As to quaternary structure, probably forms a complex with the cognate antitoxin HicB 2 which inhibits the mRNA interferase activity.

In terms of biological role, toxic component of a type II toxin-antitoxin (TA) system. A probable translation-independent mRNA interferase. In Photorhabdus laumondii subsp. laumondii (strain DSM 15139 / CIP 105565 / TT01) (Photorhabdus luminescens subsp. laumondii), this protein is Probable mRNA interferase HicA 2 (hicA2).